The chain runs to 269 residues: Extracellular metalloprotease UREG_07765 (269 aa).

An N-terminal signal peptide occupies residues 1–18 (MRLSVSLLALAFGSLVAA). Asn-179 carries N-linked (GlcNAc...) asparagine glycosylation. Zn(2+) is bound at residue His-191. Residue Glu-192 is part of the active site. His-195 lines the Zn(2+) pocket. A disordered region spans residues 207–227 (VSDTPPQRSSTQGCPSSRDSC). The segment covering 210-225 (TPPQRSSTQGCPSSRD) has biased composition (polar residues). Cys-220 and Cys-246 form a disulfide bridge.

This sequence belongs to the peptidase M43B family.

It is found in the secreted. In terms of biological role, secreted metalloproteinase that allows assimilation of proteinaceous substrates. The polypeptide is Extracellular metalloprotease UREG_07765 (Uncinocarpus reesii (strain UAMH 1704)).